We begin with the raw amino-acid sequence, 499 residues long: Lysine--tRNA ligase (499 aa).

Mg(2+) contacts are provided by Glu408 and Glu415.

This sequence belongs to the class-II aminoacyl-tRNA synthetase family. As to quaternary structure, homodimer. Mg(2+) serves as cofactor.

It is found in the cytoplasm. The catalysed reaction is tRNA(Lys) + L-lysine + ATP = L-lysyl-tRNA(Lys) + AMP + diphosphate. The polypeptide is Lysine--tRNA ligase (Thermoanaerobacter pseudethanolicus (strain ATCC 33223 / 39E) (Clostridium thermohydrosulfuricum)).